Reading from the N-terminus, the 172-residue chain is Adenine phosphoribosyltransferase (172 aa).

Belongs to the purine/pyrimidine phosphoribosyltransferase family. As to quaternary structure, homodimer.

Its subcellular location is the cytoplasm. It catalyses the reaction AMP + diphosphate = 5-phospho-alpha-D-ribose 1-diphosphate + adenine. Its pathway is purine metabolism; AMP biosynthesis via salvage pathway; AMP from adenine: step 1/1. Catalyzes a salvage reaction resulting in the formation of AMP, that is energically less costly than de novo synthesis. The polypeptide is Adenine phosphoribosyltransferase (Polynucleobacter asymbioticus (strain DSM 18221 / CIP 109841 / QLW-P1DMWA-1) (Polynucleobacter necessarius subsp. asymbioticus)).